We begin with the raw amino-acid sequence, 109 residues long: uncharacterized protein (109 aa).

The first 19 residues, 1-19 (MKKFALLAGLFVFAPMTWA), serve as a signal peptide directing secretion.

This is an uncharacterized protein from Escherichia coli O6:H1 (strain CFT073 / ATCC 700928 / UPEC).